The following is a 561-amino-acid chain: Eukaryotic translation initiation factor 3 subunit D-1 (561 aa).

Residues 98–164 (VQKPPHQRGR…RGPPPKMRES (67 aa)) are disordered. The segment covering 100–121 (KPPHQRGRFRNMRNSRSGRGRN) has biased composition (basic residues). Threonine 128 is subject to Phosphothreonine. Residues 289-303 (EFDLLTVNETSVEPP) form an RNA gate region.

This sequence belongs to the eIF-3 subunit D family. In terms of assembly, component of the eukaryotic translation initiation factor 3 (eIF-3) complex. The eIF-3 complex interacts with pix.

Its subcellular location is the cytoplasm. Functionally, mRNA cap-binding component of the eukaryotic translation initiation factor 3 (eIF-3) complex, which is involved in protein synthesis of a specialized repertoire of mRNAs and, together with other initiation factors, stimulates binding of mRNA and methionyl-tRNAi to the 40S ribosome. The eIF-3 complex specifically targets and initiates translation of a subset of mRNAs involved in cell proliferation. In the eIF-3 complex, eif3d specifically recognizes and binds the 7-methylguanosine cap of a subset of mRNAs. In Drosophila ananassae (Fruit fly), this protein is Eukaryotic translation initiation factor 3 subunit D-1.